Consider the following 421-residue polypeptide: Proton/sodium-glutamate symport protein (421 aa).

Over 1-3 the chain is Cytoplasmic; that stretch reads MRK. Residues 4–24 traverse the membrane as a helical segment; it reads IGLAWQIFIGLILGIIVGAIF. The Extracellular segment spans residues 25 to 43; sequence YGNPKVATYLQPIGDIFLR. A helical membrane pass occupies residues 44–64; it reads LIKMIVIPIVISSLVVGVASV. At 65–77 the chain is on the cytoplasmic side; sequence GDLKKLGKLGGKT. A helical transmembrane segment spans residues 78–98; the sequence is IIYFEIITTIAIVVGLLAANI. Topologically, residues 99–148 are extracellular; it reads FQPGTGVNMKSLEKTDIQSYVDTTNEVQHHSMVETFVNIVPKNIFESLTK. Residues 149–169 traverse the membrane as a helical segment; the sequence is GDMLPIIFFSVMFGLGVAAIG. At 170-198 the chain is on the cytoplasmic side; that stretch reads EKGKPVLQFFQGTAEAMFYVTNQIMKFAP. Residues 199-219 form a helical membrane-spanning segment; it reads FGVFALIGVTVSKFGVESLIP. The Extracellular portion of the chain corresponds to 220–222; the sequence is LSK. Residues 223 to 243 traverse the membrane as a helical segment; sequence LVIVVYATMVFFIFVVLGGVA. Lys-244 is a topological domain (cytoplasmic). Residues 245–265 form a helical membrane-spanning segment; that stretch reads LFGINIFHIIKILKDELILAY. Over 266-306 the chain is Extracellular; sequence STASSETVLPKIMEKMENFGCPKAITSFVIPTGYSFNLDGS. A helical transmembrane segment spans residues 307–327; the sequence is TLYQALAAIFIAQLYGIDMPI. The Cytoplasmic segment spans residues 328–330; it reads SQQ. The next 2 helical transmembrane spans lie at 331-351 and 352-372; these read ISLL…PGVS and FVVL…LAFI. The Cytoplasmic portion of the chain corresponds to 373–421; sequence AGIDRILDMARTAVNVIGNSLAAIIMSKWEGQYNEEKGKQYIAQLQQSA.

It belongs to the dicarboxylate/amino acid:cation symporter (DAACS) (TC 2.A.23) family. In terms of assembly, homotrimer.

The protein resides in the cell membrane. Functionally, this carrier protein is part of the Na(+)-dependent, binding-protein-independent glutamate-aspartate transport system. The protein is Proton/sodium-glutamate symport protein (gltT) of Geobacillus stearothermophilus (Bacillus stearothermophilus).